Reading from the N-terminus, the 570-residue chain is PTS system lactose-specific EIICB component (570 aa).

A PTS EIIC type-3 domain is found at 9 to 410 (IEKGKPFFEK…VVDIIIYYPF (402 aa)). 9 helical membrane passes run 31-51 (GFISAMPVILFSSIFLLIAYV), 65-85 (AILMKPYNYTMGLVAFLVAGT), 104-124 (INFISTMLAAMCGFLFLASDP), 133-153 (AFMGTKGLLTAFLSAFVTVIV), 178-198 (FKDLIPFSAVIIILYALDLVI), 223-243 (GWIGVTIIFGAFALFWFVGIH), 283-303 (MFIVTFGGTGATLVVPFMFMW), 340-360 (VFFIPFVLAPIVNVWIFKLFV), and 382-402 (IIMGTGFGLWSFVLAITLIVV). Residues 467–570 (QTNVLVLCAG…LDFVQQQFEN (104 aa)) form the PTS EIIB type-3 domain. Cys-474 functions as the Phosphocysteine intermediate; for EIIB activity in the catalytic mechanism. Cys-474 carries the phosphocysteine; by EIIA modification.

It is found in the cell membrane. The enzyme catalyses lactose(out) + N(pros)-phospho-L-histidyl-[protein] = lactose 6-phosphate(in) + L-histidyl-[protein]. The phosphoenolpyruvate-dependent sugar phosphotransferase system (sugar PTS), a major carbohydrate active transport system, catalyzes the phosphorylation of incoming sugar substrates concomitantly with their translocation across the cell membrane. The enzyme II LacEF PTS system is involved in lactose transport. The chain is PTS system lactose-specific EIICB component from Staphylococcus aureus (strain N315).